We begin with the raw amino-acid sequence, 159 residues long: 2-amino-4-hydroxy-6-hydroxymethyldihydropteridine pyrophosphokinase (159 aa).

This sequence belongs to the HPPK family. As to quaternary structure, monomer.

It carries out the reaction 6-hydroxymethyl-7,8-dihydropterin + ATP = (7,8-dihydropterin-6-yl)methyl diphosphate + AMP + H(+). It participates in cofactor biosynthesis; tetrahydrofolate biosynthesis; 2-amino-4-hydroxy-6-hydroxymethyl-7,8-dihydropteridine diphosphate from 7,8-dihydroneopterin triphosphate: step 4/4. Functionally, catalyzes the transfer of pyrophosphate from adenosine triphosphate (ATP) to 6-hydroxymethyl-7,8-dihydropterin, an enzymatic step in folate biosynthesis pathway. The sequence is that of 2-amino-4-hydroxy-6-hydroxymethyldihydropteridine pyrophosphokinase (folK) from Escherichia coli (strain K12).